A 128-amino-acid polypeptide reads, in one-letter code: Saitohin (128 aa).

The segment at 77–128 is disordered; that stretch reads SYSSEESSRNGAEQGRQLSIEGPFQGQNCPSHPAAALPLPMRGESQATSCQV.

Interacts with PRDX6. In terms of tissue distribution, highest expression in placenta, muscle, fetal brain, and adult brain, with lower expression in heart, kidney, stomach, testis, and adrenal gland. In the central nervous system, highest expression is in temporal lobe, hypothalamus, medulla and spinal cord, with lower expression in other brain regions.

The protein resides in the cytoplasm. Its subcellular location is the nucleus. The chain is Saitohin (STH) from Homo sapiens (Human).